A 304-amino-acid polypeptide reads, in one-letter code: N-acetyl-D-glucosamine kinase (304 aa).

Residues 4–11 (GFDMGGTK) and 133–140 (GVGGGLIV) each bind ATP. Residues His157, Cys177, Cys179, and Cys184 each coordinate Zn(2+).

The protein belongs to the ROK (NagC/XylR) family. NagK subfamily.

It catalyses the reaction N-acetyl-D-glucosamine + ATP = N-acetyl-D-glucosamine 6-phosphate + ADP + H(+). It functions in the pathway cell wall biogenesis; peptidoglycan recycling. In terms of biological role, catalyzes the phosphorylation of N-acetyl-D-glucosamine (GlcNAc) derived from cell-wall degradation, yielding GlcNAc-6-P. This chain is N-acetyl-D-glucosamine kinase, found in Yersinia pseudotuberculosis serotype O:1b (strain IP 31758).